The primary structure comprises 335 residues: Cell division protein ZipA (335 aa).

Residues 1–4 are Periplasmic-facing; sequence MDLN. A helical membrane pass occupies residues 5 to 25; that stretch reads AILIILGVIALIILVAHGIWS. The Cytoplasmic portion of the chain corresponds to 26-335; that stretch reads NRREKSQYFE…AERDYLARVS (310 aa).

It belongs to the ZipA family. As to quaternary structure, interacts with FtsZ via their C-terminal domains.

It localises to the cell inner membrane. Essential cell division protein that stabilizes the FtsZ protofilaments by cross-linking them and that serves as a cytoplasmic membrane anchor for the Z ring. Also required for the recruitment to the septal ring of downstream cell division proteins. In Histophilus somni (strain 2336) (Haemophilus somnus), this protein is Cell division protein ZipA.